The following is a 482-amino-acid chain: Vanillin dehydrogenase (482 aa).

Residue 228 to 233 (GSTHVG) coordinates NAD(+). Active-site residues include Glu-250 and Cys-284.

This sequence belongs to the aldehyde dehydrogenase family.

It catalyses the reaction vanillin + NAD(+) + H2O = vanillate + NADH + 2 H(+). Its function is as follows. Catalyzes the NAD-dependent oxidation of vanillin to vanillic acid. The chain is Vanillin dehydrogenase (vdh) from Pseudomonas fluorescens.